A 553-amino-acid polypeptide reads, in one-letter code: Rhodopsin kinase GRK7 (553 aa).

A Phosphoserine; by PKA modification is found at S36. The region spanning 56-176 (FHSLCEQQPI…VTSAFYDKFL (121 aa)) is the RGS domain. One can recognise a Protein kinase domain in the interval 191–454 (FTEFRVLGKG…SDDPRKHHFF (264 aa)). ATP is bound by residues 197-205 (LGKGGFGEV) and K220. D316 (proton acceptor) is an active-site residue. The region spanning 455-520 (KTINFPRLEA…GAVPIAWQEE (66 aa)) is the AGC-kinase C-terminal domain. C550 is modified (cysteine methyl ester). The S-geranylgeranyl cysteine moiety is linked to residue C550. Residues 551–553 (LLL) constitute a propeptide, removed in mature form.

Belongs to the protein kinase superfamily. AGC Ser/Thr protein kinase family. GPRK subfamily. As to quaternary structure, interacts (when prenylated) with PDE6D; this promotes release from membranes. In terms of processing, autophosphorylated in vitro at Ser-490. Phosphorylation at Ser-36 is regulated by light and activated by cAMP. Retinal cones, outer and inner segments.

The protein resides in the membrane. The enzyme catalyses L-threonyl-[rhodopsin] + ATP = O-phospho-L-threonyl-[rhodopsin] + ADP + H(+). It carries out the reaction L-seryl-[rhodopsin] + ATP = O-phospho-L-seryl-[rhodopsin] + ADP + H(+). Its activity is regulated as follows. Inhibited by phosphorylation of Ser-36. Functionally, retina-specific kinase involved in the shutoff of the photoresponse and adaptation to changing light conditions via cone opsin phosphorylation, including rhodopsin (RHO). The polypeptide is Rhodopsin kinase GRK7 (GRK7) (Homo sapiens (Human)).